The sequence spans 20 residues: Fibrinogen beta chain (20 aa).

Residues 1–12 (IIDYYDEGEEDR) show a composition bias toward acidic residues. The disordered stretch occupies residues 1–20 (IIDYYDEGEEDRDVGVVDAR).

As to quaternary structure, heterohexamer; disulfide linked. Contains 2 sets of 3 non-identical chains (alpha, beta and gamma). The 2 heterotrimers are in head to head conformation with the N-termini in a small central domain. Conversion of fibrinogen to fibrin is triggered by thrombin, which cleaves fibrinopeptides A and B from alpha and beta chains, and thus exposes the N-terminal polymerization sites responsible for the formation of the soft clot.

Its subcellular location is the secreted. Functionally, cleaved by the protease thrombin to yield monomers which, together with fibrinogen alpha (FGA) and fibrinogen gamma (FGG), polymerize to form an insoluble fibrin matrix. Fibrin has a major function in hemostasis as one of the primary components of blood clots. In addition, functions during the early stages of wound repair to stabilize the lesion and guide cell migration during re-epithelialization. Was originally thought to be essential for platelet aggregation, based on in vitro studies using anticoagulated blood. However subsequent studies have shown that it is not absolutely required for thrombus formation in vivo. Enhances expression of SELP in activated platelets. Maternal fibrinogen is essential for successful pregnancy. Fibrin deposition is also associated with infection, where it protects against IFNG-mediated hemorrhage. May also facilitate the antibacterial immune response via both innate and T-cell mediated pathways. The polypeptide is Fibrinogen beta chain (FGB) (Felis catus (Cat)).